The sequence spans 319 residues: Acetyl-coenzyme A carboxylase carboxyl transferase subunit alpha (319 aa).

Positions 35-296 constitute a CoA carboxyltransferase C-terminal domain; the sequence is DLDKEIEQLE…KATLLRQLAE (262 aa).

Belongs to the AccA family. As to quaternary structure, acetyl-CoA carboxylase is a heterohexamer composed of biotin carboxyl carrier protein (AccB), biotin carboxylase (AccC) and two subunits each of ACCase subunit alpha (AccA) and ACCase subunit beta (AccD).

It localises to the cytoplasm. It carries out the reaction N(6)-carboxybiotinyl-L-lysyl-[protein] + acetyl-CoA = N(6)-biotinyl-L-lysyl-[protein] + malonyl-CoA. It functions in the pathway lipid metabolism; malonyl-CoA biosynthesis; malonyl-CoA from acetyl-CoA: step 1/1. Component of the acetyl coenzyme A carboxylase (ACC) complex. First, biotin carboxylase catalyzes the carboxylation of biotin on its carrier protein (BCCP) and then the CO(2) group is transferred by the carboxyltransferase to acetyl-CoA to form malonyl-CoA. This is Acetyl-coenzyme A carboxylase carboxyl transferase subunit alpha from Vibrio vulnificus (strain CMCP6).